We begin with the raw amino-acid sequence, 608 residues long: Developmental regulatory protein wetA (608 aa).

7 disordered regions span residues 54–88 (ADHHGHNPGMPTLADGLMLDHPSESTASASSGVST), 102–125 (VDATVPSQPGSSAAPGASHDVDPR), 146–186 (VSMS…MTRK), 202–226 (SKLRKPRKPIAMDRPGSPTMDNPPR), 309–352 (WPHQ…HAVP), 447–544 (AQTY…GDIG), and 556–576 (LMTGVAPSGSSKTKARREREA). 3 stretches are compositionally biased toward low complexity: residues 77 to 88 (ESTASASSGVST), 107 to 119 (PSQPGSSAAPGAS), and 163 to 175 (SSPGRRVPVSQPS). The segment covering 313–338 (QHPHPHPHPHHPQAHTHPHPHPHPHP) has biased composition (basic residues). Composition is skewed to low complexity over residues 339-350 (HQQAVAGHPQHA) and 502-517 (SSNGSVASARSASGRG).

Belongs to the wetA family.

Functionally, abaA and wetA are pivotal regulators of conidiophore development and conidium maturation. They act individually and together to regulate their own expression and that of numerous other sporulation-specific genes. Functions to maintain conidial dormancy by suppressing microcycle conidiation. The polypeptide is Developmental regulatory protein wetA (Gibberella zeae (strain ATCC MYA-4620 / CBS 123657 / FGSC 9075 / NRRL 31084 / PH-1) (Wheat head blight fungus)).